We begin with the raw amino-acid sequence, 881 residues long: Rho GTPase-activating protein 17 (881 aa).

Residues 14 to 246 (QTVGRAEKTE…MRAHQDKWAE (233 aa)) enclose the BAR domain. A Rho-GAP domain is found at 252-442 (TPLEEHLKRS…PIIQHADWFF (191 aa)). The span at 459 to 475 (TPSSNHSFHTGNDSDSG) shows a compositional bias: polar residues. Positions 459-482 (TPSSNHSFHTGNDSDSGTLERKRP) are disordered. Phosphoserine occurs at positions 484 and 575. The disordered stretch occupies residues 511-881 (GGTLNRKHIS…IDNDTESTAL (371 aa)). Polar residues predominate over residues 592–617 (RNNSQIASGQNQPQAAAGSHQLSMGQ). Pro residues predominate over residues 637-650 (APAPPKPGNPPPGH). Residues 653-664 (GQSSSGTSQHPP) show a composition bias toward low complexity. Pro residues predominate over residues 665–678 (SLSPKPPTRSPSPP). A phosphothreonine mark is found at Thr679 and Thr682. Low complexity predominate over residues 679-698 (TQHTGQPPGQPSAPSQLSAP). Ser702 and Ser704 each carry phosphoserine. 3 stretches are compositionally biased toward pro residues: residues 712 to 721 (NHPPPQPPTQ), 752 to 764 (HTPP…PSTP), and 806 to 816 (RPSVPPPPQPP). Phosphothreonine is present on residues Thr753, Thr757, and Thr759. The SH3-binding signature appears at 753 to 766 (TPPQTPTPPSTPPL). At Ser762 the chain carries Phosphoserine. At Thr763 the chain carries Phosphothreonine. Over residues 822 to 844 (GDSSLTNTAPTASKIVTDSNSRV) the composition is skewed to polar residues. Residues 845-865 (SEPHRSIFPEMHSDSASKDVP) show a composition bias toward basic and acidic residues. Residues 872 to 881 (IDNDTESTAL) are compositionally biased toward acidic residues.

As to quaternary structure, component of a complex whose core is composed of ARHGAP17, AMOT, PALS1, PATJ and PARD3/PAR3. Interacts with NHERF1, FNBP1, TRIP10, CAPZA (CAPZA1, CAPZA2 or CAPZA3), CAPZB, CD2AP and SH3KBP1/CIN85. In terms of tissue distribution, ubiquitously expressed. Expressed at higher level in heart and placenta.

It localises to the membrane. Its subcellular location is the cytoplasm. The protein resides in the cell junction. The protein localises to the tight junction. Functionally, rho GTPase-activating protein involved in the maintenance of tight junction by regulating the activity of CDC42, thereby playing a central role in apical polarity of epithelial cells. Specifically acts as a GTPase activator for the CDC42 GTPase by converting it to an inactive GDP-bound state. The complex formed with AMOT acts by regulating the uptake of polarity proteins at tight junctions, possibly by deciding whether tight junction transmembrane proteins are recycled back to the plasma membrane or sent elsewhere. Participates in the Ca(2+)-dependent regulation of exocytosis, possibly by catalyzing GTPase activity of Rho family proteins and by inducing the reorganization of the cortical actin filaments. Acts as a GTPase activator in vitro for RAC1. This chain is Rho GTPase-activating protein 17 (ARHGAP17), found in Homo sapiens (Human).